The sequence spans 274 residues: Mitochondrial S-adenosylmethionine carrier protein (274 aa).

Solcar repeat units follow at residues 4 to 77, 86 to 168, and 177 to 265; these read PGFV…VKWF, LTPM…LKAL, and VDSW…THSL. The next 6 helical transmembrane spans lie at 5 to 25, 49 to 69, 85 to 105, 142 to 162, 182 to 202, and 238 to 258; these read GFVA…LILF, IYAG…AFFI, YLTP…ACLI, RGYK…FPLW, SAVC…PLDV, and FAGV…FLGA.

The protein belongs to the mitochondrial carrier (TC 2.A.29) family. Widely expressed. Highly expressed in testis, with moderate expression in brain, heart, kidney, lung, skeletal muscle, pancreas, small intestine and liver, and low expression in spleen.

The protein localises to the mitochondrion inner membrane. It carries out the reaction S-adenosyl-L-homocysteine(out) + S-adenosyl-L-methionine(in) = S-adenosyl-L-homocysteine(in) + S-adenosyl-L-methionine(out). With respect to regulation, strongly inhibited by tannic acid and Bromocresol Purple. In terms of biological role, mitochondrial S-adenosyl-L-methionine/S-adenosyl-L-homocysteine antiporter. Mediates the exchange of cytosolic S-adenosyl-L-methionine, the predominant methyl-group donor for macromolecule methylation processes, for mitochondrial S-adenosylhomocysteine(SAH), a by-product of methylation reactions. This is Mitochondrial S-adenosylmethionine carrier protein from Homo sapiens (Human).